Reading from the N-terminus, the 365-residue chain is RISC-loading complex subunit TARBP2 (365 aa).

3 sufficient for interaction with PRKRA regions span residues 22–105, 151–233, and 286–365; these read MLAA…EPAL, SPQQ…DARD, and LGAL…AGSK. Positions 30-97 constitute a DRBM 1 domain; the sequence is TPISLLQEYG…AEVALKHLKG (68 aa). Ser151 carries the phosphoserine modification. 2 DRBM domains span residues 158-226 and 292-360; these read NPVG…RVHT and ACCS…YLRI. Residues 227 to 365 are sufficient for interaction with DICER1; sequence VPLDARDGNE…QYLRIMAGSK (139 aa).

Belongs to the TARBP2 family. In terms of assembly, self-associates. Component of the RISC loading complex (RLC), or micro-RNA (miRNA) loading complex (miRLC), which is composed of DICER1, AGO2 and TARBP2. Note that the trimeric RLC/miRLC is also referred to as RISC. Interacts with EIF2AK2/PKR and inhibits its protein kinase activity. Interacts with DHX9. Interacts with DICER1 and PRKRA. Interacts with DICER1, AGO2, MOV10, EIF6 and RPL7A (60S ribosome subunit); they form a large RNA-induced silencing complex (RISC). Interacts with IRF7; this interaction prevents IRF7 phosphorylation and activation.

The protein resides in the cytoplasm. It localises to the perinuclear region. The protein localises to the nucleus. Functionally, required for formation of the RNA induced silencing complex (RISC). Component of the RISC loading complex (RLC), also known as the micro-RNA (miRNA) loading complex (miRLC), which is composed of DICER1, AGO2 and TARBP2. Within the RLC/miRLC, DICER1 and TARBP2 are required to process precursor miRNAs (pre-miRNAs) to mature miRNAs and then load them onto AGO2. AGO2 bound to the mature miRNA constitutes the minimal RISC and may subsequently dissociate from DICER1 and TARBP2. May also play a role in the production of short interfering RNAs (siRNAs) from double-stranded RNA (dsRNA) by DICER1. Binds in vitro to the PRM1 3'-UTR. Seems to act as a repressor of translation. For some pre-miRNA substrates, may also alter the choice of cleavage site by DICER1. Negatively regulates IRF7-mediated IFN-beta signaling triggered by viral infection by inhibiting the phosphorylation of IRF7 and promoting its 'Lys'-48-linked ubiquitination and degradation. This Mus musculus (Mouse) protein is RISC-loading complex subunit TARBP2 (Tarbp2).